Reading from the N-terminus, the 445-residue chain is GTPase Der (445 aa).

EngA-type G domains follow at residues 3–167 (PVIA…YAGQ) and 180–353 (IKIA…AAAM). Residues 9–16 (GRPNVGKS), 56–60 (DTGGF), 119–122 (NKAE), 186–193 (GRPNVGKS), 233–237 (DTAGL), and 298–301 (NKWD) each bind GTP. The KH-like domain maps to 354–438 (AKLPTPKLTR…PLRIEFRSSN (85 aa)).

Belongs to the TRAFAC class TrmE-Era-EngA-EngB-Septin-like GTPase superfamily. EngA (Der) GTPase family. In terms of assembly, associates with the 50S ribosomal subunit.

Functionally, GTPase that plays an essential role in the late steps of ribosome biogenesis. This is GTPase Der from Burkholderia ambifaria (strain MC40-6).